The primary structure comprises 181 residues: Malignant T-cell-amplified sequence 1-B (181 aa).

Residues 92 to 171 (LPHQQVDKGA…IGIENIHYLN (80 aa)) enclose the PUA domain.

It belongs to the MCTS1 family.

The protein localises to the cytoplasm. Plays a role as translation enhancer and involved in cell cycle regulation. The polypeptide is Malignant T-cell-amplified sequence 1-B (mcts1-b) (Xenopus laevis (African clawed frog)).